Consider the following 102-residue polypeptide: Acid shock protein (102 aa).

A signal peptide spans 1–21 (MKKVLALVVAAAMGLSSAAFA). Low complexity predominate over residues 21-41 (AAETTTTPAPTATTTKAAPAK). Residues 21–102 (AAETTTTPAP…PAKPAAQPAA (82 aa)) form a disordered region. Positions 22 to 58 (AETTTTPAPTATTTKAAPAKTTHHKKQHKAAPAQKAQ) are excised as a propeptide. The span at 80–90 (AAKKHAKKHSH) shows a compositional bias: basic residues. Residues 91–102 (QQPAKPAAQPAA) show a composition bias toward low complexity.

This sequence belongs to the Asr family. In terms of processing, proteolytic processing gives rise to the active protein.

It is found in the periplasm. Functionally, required for growth and/or survival at acidic conditions. The chain is Acid shock protein from Escherichia coli (strain K12 / MC4100 / BW2952).